Reading from the N-terminus, the 146-residue chain is 3-hydroxyacyl-[acyl-carrier-protein] dehydratase FabZ (146 aa).

Residue H48 is part of the active site.

The protein belongs to the thioester dehydratase family. FabZ subfamily.

The protein resides in the cytoplasm. The catalysed reaction is a (3R)-hydroxyacyl-[ACP] = a (2E)-enoyl-[ACP] + H2O. Involved in unsaturated fatty acids biosynthesis. Catalyzes the dehydration of short chain beta-hydroxyacyl-ACPs and long chain saturated and unsaturated beta-hydroxyacyl-ACPs. In Campylobacter lari (strain RM2100 / D67 / ATCC BAA-1060), this protein is 3-hydroxyacyl-[acyl-carrier-protein] dehydratase FabZ.